The chain runs to 259 residues: Global transcriptional regulator CodY (259 aa).

A GAF domain region spans residues 1–155 (MALLQKTRII…GATVVGMEIL (155 aa)). Residues 203 to 222 (ASKIADRVGITRSVIVNALR) constitute a DNA-binding region (H-T-H motif). Phosphoserine is present on Ser215.

This sequence belongs to the CodY family.

The protein localises to the cytoplasm. DNA-binding global transcriptional regulator which is involved in the adaptive response to starvation and acts by directly or indirectly controlling the expression of numerous genes in response to nutrient availability. During rapid exponential growth, CodY is highly active and represses genes whose products allow adaptation to nutrient depletion. The polypeptide is Global transcriptional regulator CodY (Bacillus velezensis (strain DSM 23117 / BGSC 10A6 / LMG 26770 / FZB42) (Bacillus amyloliquefaciens subsp. plantarum)).